A 417-amino-acid chain; its full sequence is DnaJ protein homolog ANJ1 (417 aa).

In terms of domain architecture, J spans 11-76 (STRYYEILGV…REIYDQYGED (66 aa)). The segment at 135-219 (GTTKKLSLSR…CKGEKVVQEK (85 aa)) adopts a CR-type zinc-finger fold. CXXCXGXG motif repeat units follow at residues 148 to 155 (CSKCTGKG), 164 to 171 (CSGCQGTG), and 191 to 198 (CNECKGTG). Residues 207-214 (CPQCKGEK) form a CXXCXGXG motif; approximate repeat. The tract at residues 384-417 (IEEEMKRKQTQAQQEAYDEDDEPAGGQRVQCAQQ) is disordered. A Cysteine methyl ester modification is found at C414. The S-farnesyl cysteine moiety is linked to residue C414. Residues 415-417 (AQQ) constitute a propeptide, removed in mature form.

It localises to the membrane. In terms of biological role, plays a continuous role in plant development probably in the structural organization of compartments. This is DnaJ protein homolog ANJ1 from Atriplex nummularia (Old man saltbush).